A 543-amino-acid chain; its full sequence is Protein DETOXIFICATION 47, chloroplastic (543 aa).

The N-terminal 30 residues, Met-1–Val-30, are a transit peptide targeting the chloroplast. A coiled-coil region spans residues Val-55–Ser-94. The next 12 membrane-spanning stretches (helical) occupy residues Gly-107 to Ile-127, Leu-135 to Leu-155, Val-181 to Gly-201, Gly-228 to Lys-248, Ala-256 to Gly-276, Gly-278 to Met-298, Leu-319 to Phe-339, Phe-342 to Ala-362, Ile-406 to Phe-426, Leu-443 to Thr-463, Phe-472 to Thr-492, and Gly-497 to Leu-517.

The protein belongs to the multi antimicrobial extrusion (MATE) (TC 2.A.66.1) family. As to expression, preferentially expressed in the epidermal cells.

Its subcellular location is the plastid. The protein localises to the chloroplast membrane. Its function is as follows. Functions as a multidrug and toxin extrusion transporter in the export of salicylic acid (SA) from the chloroplast to the cytoplasm. Plays an essential function in plant defense via the pathogen-induced salicylic acid (SA) accumulation. Also acts as a key component of the Age-related resistance (ARR) pathway. This is Protein DETOXIFICATION 47, chloroplastic from Arabidopsis thaliana (Mouse-ear cress).